Reading from the N-terminus, the 296-residue chain is Solute carrier protein FPSE_08119 (296 aa).

A run of 3 helical transmembrane segments spans residues 12 to 32 (GLAA…GMVA), 122 to 142 (AGVG…VILI), and 219 to 239 (AVAA…FDFV). 3 Solcar repeats span residues 16-102 (LQTA…FEKE), 114-205 (LSFG…AKNQ), and 213-296 (SPPV…GPHS).

Belongs to the mitochondrial carrier (TC 2.A.29) family.

The protein localises to the mitochondrion inner membrane. In terms of biological role, solute carrier protein; part of the Fusarium detoxification of benzoxazolinone cluster involved in the degradation of benzoxazolinones produced by the host plant. Maize, wheat, and rye produce the 2 benzoxazinone phytoanticipins 2,4-dihy-droxy-7-methoxy-1,4-benzoxazin-3-one (DIMBOA) and 2,4-dihydroxy-1,4-benzoxazin-3-one (DIBOA) that, due to their inherent instability once released, spontaneously degrade to the more stable corresponding benzoxazolinones, 6-methoxy-2-benzoxazolinone (MBOA) and 2-benzoxazolinone (BOA), respectively. The polypeptide is Solute carrier protein FPSE_08119 (Fusarium pseudograminearum (strain CS3096) (Wheat and barley crown-rot fungus)).